Consider the following 344-residue polypeptide: MVTERQQDILNLIIDIFTKTHEPVGSKALQESINSSSATIRNDMAELEKQGLLEKAHTSSGRMPSVAGFQYYVKHSLDFDRLAENEVYEIVKAFDQEFFKLEDILQEAANLLTDLSGCTVVALDVEPSRQRLTAFDIVVLGQHTALAVFTLDESRTVTSQFLIPRNFLQEDLLKLKSIIQERFLGHTVLDIHYKIRTEIPQIIQRYFTTTDNVIDLFEHIFKEMFNENIVMAGKVHLLNFANLAAYQFFDQPQKVALEIREGLREDQMQNVRVADGQESCLADLAVISSKFLIPYRGVGILAIIGPVNLDYQQLINQVNVVNRVLTMKLTDFYRYLSSNHYEVH.

The protein belongs to the HrcA family.

Negative regulator of class I heat shock genes (grpE-dnaK-dnaJ and groELS operons). Prevents heat-shock induction of these operons. This Streptococcus pneumoniae serotype 19F (strain G54) protein is Heat-inducible transcription repressor HrcA.